A 90-amino-acid polypeptide reads, in one-letter code: MSNSEGWXSFXQTLSGLPQWASADCVAGPLVSAGITDINIEDDQGIHVRLIVRDAEGRMVWRAWNFEPDAGEGFNRYIHRSGIRTDTFPR.

It belongs to the UPF0401 family.

The polypeptide is Putative UPF0401 protein YpjI (ypjI) (Escherichia coli (strain K12)).